Consider the following 313-residue polypeptide: Protein sprouty homolog 2 (313 aa).

The span at 1–14 (METRVQHGSGSQAL) shows a compositional bias: polar residues. Disordered regions lie at residues 1-31 (METR…PDLR) and 54-146 (EYTE…VADG). Composition is skewed to basic and acidic residues over residues 17–31 (ARRD…PDLR) and 78–89 (KSERPHGLPEHR). Residues 108–131 (SRSISTVSTGSRSSTRTSTSSNSS) are compositionally biased toward low complexity. Positions 132–141 (EQRLLGSSSG) are enriched in polar residues. The SPR domain maps to 175-289 (RCEDCGKCKC…CYDRVNRPGC (115 aa)).

This sequence belongs to the sprouty family. In terms of tissue distribution, brain and interlimb region.

It localises to the cytoplasm. Its subcellular location is the membrane. In terms of biological role, acts as an antagonist of FGF-induced retinal lens fiber differentiation. Inhibits TGFB-induced epithelial-to-mesenchymal transition in retinal lens epithelial cells. May play an important role in FGF-mediated patterning of the mid/hindbrain region by acting to modulate the signaling effects of FGF8. The protein is Protein sprouty homolog 2 (SPRY2) of Gallus gallus (Chicken).